Reading from the N-terminus, the 158-residue chain is Class 10 plant pathogenesis-related protein 2D (158 aa).

Aspartate 8 lines the trans-zeatin pocket. Residues proline 32, valine 35, and isoleucine 38 each contribute to the Ca(2+) site. Positions 60, 69, 81, and 83 each coordinate trans-zeatin.

The protein belongs to the BetVI family.

Its subcellular location is the cytoplasm. It is found in the cytosol. Functionally, class II ribonuclease (RNase). Binds to cytokinins. Interacts with melatonin. The protein is Class 10 plant pathogenesis-related protein 2D of Lupinus luteus (European yellow lupine).